Here is a 287-residue protein sequence, read N- to C-terminus: mRNA-capping enzyme regulatory subunit OPG124 (287 aa).

The protein belongs to the orthopoxvirus mRNA-capping enzyme regulatory subunit family. Interacts with the late transcription elongation factor VLTF-4/OPG110. Interacts with the late transcription factors VLTF-1.

Its subcellular location is the virion. Its function is as follows. Acts with RNA polymerase to initiate transcription from late gene promoters. The sequence is that of mRNA-capping enzyme regulatory subunit OPG124 (OPG124) from Monkeypox virus.